A 171-amino-acid chain; its full sequence is Shikimate kinase (171 aa).

Residue 14–19 (GAGKST) participates in ATP binding. Serine 18 lines the Mg(2+) pocket. Residues aspartate 36, arginine 60, and glycine 82 each coordinate substrate. Arginine 120 serves as a coordination point for ATP. Residue arginine 139 coordinates substrate. Glutamine 156 serves as a coordination point for ATP.

It belongs to the shikimate kinase family. In terms of assembly, monomer. Mg(2+) is required as a cofactor.

The protein localises to the cytoplasm. The enzyme catalyses shikimate + ATP = 3-phosphoshikimate + ADP + H(+). It functions in the pathway metabolic intermediate biosynthesis; chorismate biosynthesis; chorismate from D-erythrose 4-phosphate and phosphoenolpyruvate: step 5/7. In terms of biological role, catalyzes the specific phosphorylation of the 3-hydroxyl group of shikimic acid using ATP as a cosubstrate. The protein is Shikimate kinase of Alteromonas mediterranea (strain DSM 17117 / CIP 110805 / LMG 28347 / Deep ecotype).